A 360-amino-acid chain; its full sequence is Neutral protease 2 homolog SS1G_13741 (360 aa).

Residue asparagine 129 is glycosylated (N-linked (GlcNAc...) asparagine). Cystine bridges form between cysteine 189–cysteine 261 and cysteine 268–cysteine 286. Histidine 311 is a binding site for Zn(2+). Glutamate 312 is a catalytic residue. 2 residues coordinate Zn(2+): histidine 315 and aspartate 326.

It belongs to the peptidase M35 family. The cofactor is Zn(2+).

It is found in the secreted. The enzyme catalyses Preferential cleavage of bonds with hydrophobic residues in P1'. Also 3-Asn-|-Gln-4 and 8-Gly-|-Ser-9 bonds in insulin B chain.. Secreted metalloproteinase that allows assimilation of proteinaceous substrates. Shows high activities on basic nuclear substrates such as histone and protamine. The protein is Neutral protease 2 homolog SS1G_13741 of Sclerotinia sclerotiorum (strain ATCC 18683 / 1980 / Ss-1) (White mold).